The following is a 726-amino-acid chain: Peroxisomal bifunctional enzyme (726 aa).

Residues 1–284 (MAEYLRLPHS…FAERSAPKWS (284 aa)) are enoyl-CoA hydratase / isomerase. The residue at position 38 (lysine 38) is an N6-succinyllysine. Residue glycine 103 coordinates substrate. An N6-acetyllysine; alternate modification is found at lysine 167. Lysine 167 carries the N6-succinyllysine; alternate modification. The residue at position 173 (lysine 173) is an N6-acetyllysine. Lysine 185 bears the N6-succinyllysine mark. Lysine 221 is modified (N6-acetyllysine; alternate). Position 221 is an N6-succinyllysine; alternate (lysine 221). An N6-succinyllysine mark is found at lysine 282, lysine 292, and lysine 333. Residues 285–575 (TPSGASWKTA…DMLCELGRFG (291 aa)) form a 3-hydroxyacyl-CoA dehydrogenase region. Residues lysine 348 and lysine 352 each carry the N6-acetyllysine modification. A disordered region spans residues 352 to 371 (KSRQQCGQQRSGPKPRFSSS). Residues 353-371 (SRQQCGQQRSGPKPRFSSS) are compositionally biased toward polar residues. Lysine 467 is subject to N6-acetyllysine. At lysine 535 the chain carries N6-succinyllysine. Lysine 587, lysine 594, and lysine 713 each carry N6-acetyllysine; alternate. N6-succinyllysine; alternate occurs at positions 587, 594, and 713. The Microbody targeting signal motif lies at 724–726 (SKL). Lysine 725 is subject to N6-succinyllysine.

It in the N-terminal section; belongs to the enoyl-CoA hydratase/isomerase family. In the C-terminal section; belongs to the 3-hydroxyacyl-CoA dehydrogenase family. As to quaternary structure, monomer. Post-translationally, acetylated, leading to enhanced enzyme activity. Acetylation is enhanced by up to 80% after treatment either with trichostin A (TSA) or with nicotinamide (NAM) with highest increase on Lys-348. Acetylation and enzyme activity increased by about 1.5% on addition of fatty acids.

The protein localises to the peroxisome. The enzyme catalyses a (3S)-3-hydroxyacyl-CoA = a (2E)-enoyl-CoA + H2O. It carries out the reaction a 4-saturated-(3S)-3-hydroxyacyl-CoA = a (3E)-enoyl-CoA + H2O. The catalysed reaction is a (3Z)-enoyl-CoA = a 4-saturated (2E)-enoyl-CoA. It catalyses the reaction a (3E)-enoyl-CoA = a 4-saturated (2E)-enoyl-CoA. The enzyme catalyses a (3S)-3-hydroxyacyl-CoA + NAD(+) = a 3-oxoacyl-CoA + NADH + H(+). It carries out the reaction (2S,3S)-3-hydroxy-2-methylbutanoyl-CoA = (2E)-2-methylbut-2-enoyl-CoA + H2O. The catalysed reaction is (3S)-hydroxyhexadecanoyl-CoA + NAD(+) = 3-oxohexadecanoyl-CoA + NADH + H(+). It catalyses the reaction (3S)-hydroxyhexadecanoyl-CoA = (2E)-hexadecenoyl-CoA + H2O. The enzyme catalyses (2E)-hexadecenedioyl-CoA + H2O = (3S)-hydroxyhexadecanedioyl-CoA. It carries out the reaction (3S)-hydroxyhexadecanedioyl-CoA + NAD(+) = 3-oxohexadecanedioyl-CoA + NADH + H(+). The catalysed reaction is (3E,5Z)-tetradecadienoyl-CoA = (2E,5Z)-tetradecadienoyl-CoA. It catalyses the reaction (3E,5Z)-octadienoyl-CoA = (2E,5Z)-octadienoyl-CoA. The enzyme catalyses (3S)-hydroxydecanoyl-CoA + NAD(+) = 3-oxodecanoyl-CoA + NADH + H(+). It carries out the reaction (3E)-decenoyl-CoA = (2E)-decenoyl-CoA. The catalysed reaction is (3Z)-hexenoyl-CoA = (2E)-hexenoyl-CoA. It catalyses the reaction (3E)-hexenoyl-CoA = (2E)-hexenoyl-CoA. The enzyme catalyses (3S)-hydroxydecanoyl-CoA = (2E)-decenoyl-CoA + H2O. It carries out the reaction (3S)-hydroxyhexanoyl-CoA = (2E)-hexenoyl-CoA + H2O. It functions in the pathway lipid metabolism; fatty acid beta-oxidation. Its activity is regulated as follows. Enzyme activity enhanced by acetylation. Functionally, peroxisomal trifunctional enzyme possessing 2-enoyl-CoA hydratase, 3-hydroxyacyl-CoA dehydrogenase, and delta 3, delta 2-enoyl-CoA isomerase activities. Catalyzes two of the four reactions of the long chain fatty acids peroxisomal beta-oxidation pathway. Can also use branched-chain fatty acids such as 2-methyl-2E-butenoyl-CoA as a substrate, which is hydrated into (2S,3S)-3-hydroxy-2-methylbutanoyl-CoA. Optimal isomerase for 2,5 double bonds into 3,5 form isomerization in a range of enoyl-CoA species. Also able to isomerize both 3-cis and 3-trans double bonds into the 2-trans form in a range of enoyl-CoA species. Regulates the amount of medium-chain dicarboxylic fatty acids which are essential regulators of all fatty acid oxidation pathways. Also involved in the degradation of long-chain dicarboxylic acids through peroxisomal beta-oxidation. In Cavia porcellus (Guinea pig), this protein is Peroxisomal bifunctional enzyme (EHHADH).